We begin with the raw amino-acid sequence, 346 residues long: fMet-Leu-Phe receptor (346 aa).

2 N-linked (GlcNAc...) asparagine glycosylation sites follow: Asn-1 and Asn-7. The Extracellular segment spans residues 1 to 24; sequence NSSLPTNISGGTPAVSAGYLFLDI. The helical transmembrane segment at 25–47 threads the bilayer; the sequence is ITYLVYAVTFVLGVLGNGLVIWV. The Cytoplasmic segment spans residues 48–58; it reads AGFRMTHTVTT. Residues 59–80 traverse the membrane as a helical segment; that stretch reads ISYLNLAVADFCFTSTLPFFMV. At 81-97 the chain is on the extracellular side; it reads RKAMGGHWPFGWFLCKF. A disulfide bond links Cys-95 and Cys-173. The chain crosses the membrane as a helical span at residues 98-118; sequence IFTIVDINLFGSVFLIALIAL. Over 119–137 the chain is Cytoplasmic; that stretch reads DRCVCVLHPVWTQNHRTVS. A helical transmembrane segment spans residues 138 to 159; it reads LAKKVIIGPWVMALLLTLPVII. Residues 160-202 lie on the Extracellular side of the membrane; the sequence is RVTTVPGKMGTVSCTFNFSPWTNDPKERIKVAIAMLTVRGIIR. Residues 203–223 form a helical membrane-spanning segment; that stretch reads FIIGFSAPMSIVAVSYGLIAT. Residues 224–239 lie on the Cytoplasmic side of the membrane; it reads KIHKQGLIKSSRPLRV. A helical transmembrane segment spans residues 240-263; it reads LSFVAAAFFLCWSPYQVVAFIATV. Topologically, residues 264-282 are extracellular; that stretch reads RIRELLQGMYKEISIAVDV. A helical transmembrane segment spans residues 283-302; sequence TSALAFFNSCLNPMLYVFMG. Residues 303-346 lie on the Cytoplasmic side of the membrane; it reads QDFRERLIHSLPASLERALTEASTQTSDTATNSTLPSAEVALQA. Over residues 324-338 the composition is skewed to polar residues; sequence ASTQTSDTATNSTLP. The tract at residues 324–346 is disordered; it reads ASTQTSDTATNSTLPSAEVALQA.

This sequence belongs to the G-protein coupled receptor 1 family. In terms of processing, phosphorylated; which is necessary for desensitization.

The protein localises to the cell membrane. High affinity receptor for N-formyl-methionyl peptides (fMLP), which are powerful neutrophil chemotactic factors. Binding of fMLP to the receptor stimulates intracellular calcium mobilization and superoxide anion release. This response is mediated via a G-protein that activates a phosphatidylinositol-calcium second messenger system. Receptor for TAFA4, mediates its effects on chemoattracting macrophages, promoting phagocytosis and increasing ROS release. Receptor for cathepsin CTSG, leading to increased phagocyte chemotaxis. The chain is fMet-Leu-Phe receptor (FPR1) from Pongo pygmaeus (Bornean orangutan).